The sequence spans 257 residues: E3 ubiquitin-protein ligase RNF170 (257 aa).

Over M1–D24 the chain is Lumenal. The helical transmembrane segment at Q25–L45 threads the bilayer. Residues R46–R200 lie on the Cytoplasmic side of the membrane. The segment at C87–R130 adopts an RING-type zinc-finger fold. A helical transmembrane segment spans residues I201–E221. A222 is a topological domain (lumenal). Residues V223–I243 form a helical membrane-spanning segment. Residues S244–R257 lie on the Cytoplasmic side of the membrane.

The protein resides in the endoplasmic reticulum membrane. The enzyme catalyses S-ubiquitinyl-[E2 ubiquitin-conjugating enzyme]-L-cysteine + [acceptor protein]-L-lysine = [E2 ubiquitin-conjugating enzyme]-L-cysteine + N(6)-ubiquitinyl-[acceptor protein]-L-lysine.. Its pathway is protein modification; protein ubiquitination. In terms of biological role, E3 ubiquitin-protein ligase that plays an essential role in stimulus-induced inositol 1,4,5-trisphosphate receptor (ITPR) ubiquitination and degradation via the endoplasmic reticulum-associated degradation (ERAD) pathway. Also involved in ITPR turnover in resting cells. This Xenopus tropicalis (Western clawed frog) protein is E3 ubiquitin-protein ligase RNF170 (rnf170).